Reading from the N-terminus, the 302-residue chain is Negative regulator of the PHO system (302 aa).

One can recognise a Protein kinase domain in the interval 6–296 (FKQLEKLGNG…AKQALLHPWF (291 aa)). ATP-binding positions include 12-20 (LGNGTYATV) and Lys35. Asp132 functions as the Proton acceptor in the catalytic mechanism.

The protein belongs to the protein kinase superfamily. CMGC Ser/Thr protein kinase family. CDC2/CDKX subfamily. As to quaternary structure, interacts with a number of cyclins.

It catalyses the reaction L-seryl-[protein] + ATP = O-phospho-L-seryl-[protein] + ADP + H(+). The catalysed reaction is L-threonyl-[protein] + ATP = O-phospho-L-threonyl-[protein] + ADP + H(+). Functionally, when phosphate concentrations are high it phosphorylates the PHO4 transcription factor thus establishing repression. The polypeptide is Negative regulator of the PHO system (PHO85) (Candida glabrata (strain ATCC 2001 / BCRC 20586 / JCM 3761 / NBRC 0622 / NRRL Y-65 / CBS 138) (Yeast)).